Reading from the N-terminus, the 456-residue chain is UDP-N-acetylmuramoylalanine--D-glutamate ligase (456 aa).

Position 122–128 (122–128 (GSNGKST)) interacts with ATP.

It belongs to the MurCDEF family.

It is found in the cytoplasm. It catalyses the reaction UDP-N-acetyl-alpha-D-muramoyl-L-alanine + D-glutamate + ATP = UDP-N-acetyl-alpha-D-muramoyl-L-alanyl-D-glutamate + ADP + phosphate + H(+). The protein operates within cell wall biogenesis; peptidoglycan biosynthesis. In terms of biological role, cell wall formation. Catalyzes the addition of glutamate to the nucleotide precursor UDP-N-acetylmuramoyl-L-alanine (UMA). This is UDP-N-acetylmuramoylalanine--D-glutamate ligase from Saccharophagus degradans (strain 2-40 / ATCC 43961 / DSM 17024).